Reading from the N-terminus, the 337-residue chain is DNA-directed RNA polymerase subunit alpha (337 aa).

Residues 1-232 form an alpha N-terminal domain (alpha-NTD) region; that stretch reads MVREEVRVCT…IDLFIPFLHA (232 aa). The segment at 266–337 is alpha C-terminal domain (alpha-CTD); the sequence is EISFQCIFID…FAIDLPKNKF (72 aa).

Belongs to the RNA polymerase alpha chain family. As to quaternary structure, in plastids the minimal PEP RNA polymerase catalytic core is composed of four subunits: alpha, beta, beta', and beta''. When a (nuclear-encoded) sigma factor is associated with the core the holoenzyme is formed, which can initiate transcription.

The protein resides in the plastid. It is found in the chloroplast. The catalysed reaction is RNA(n) + a ribonucleoside 5'-triphosphate = RNA(n+1) + diphosphate. DNA-dependent RNA polymerase catalyzes the transcription of DNA into RNA using the four ribonucleoside triphosphates as substrates. This Buxus microphylla (Littleleaf boxwood) protein is DNA-directed RNA polymerase subunit alpha.